The sequence spans 2894 residues: Bifunctional DNA-directed RNA polymerase subunit beta-beta' (2894 aa).

Residues 1 to 1378 are DNA-directed RNA polymerase subunit beta; the sequence is MANFTKLKNR…DVNIYGDEQD (1378 aa). The DNA-directed RNA polymerase subunit beta' stretch occupies residues 1385–2894; the sequence is PIAIKEDERP…QEEYEEDEEE (1510 aa). Residues Cys1450, Cys1452, Cys1465, and Cys1468 each coordinate Zn(2+). Residues Asp1849, Asp1851, and Asp1853 each coordinate Mg(2+). Residues Cys2179, Cys2253, Cys2260, and Cys2263 each contribute to the Zn(2+) site.

This sequence in the N-terminal section; belongs to the RNA polymerase beta chain family. In the C-terminal section; belongs to the RNA polymerase beta' chain family. The RNAP catalytic core consists of 2 alpha, 1 beta/beta' and 1 omega subunit. When a sigma factor is associated with the core the holoenzyme is formed, which can initiate transcription. Mg(2+) is required as a cofactor. Requires Zn(2+) as cofactor.

The enzyme catalyses RNA(n) + a ribonucleoside 5'-triphosphate = RNA(n+1) + diphosphate. Its function is as follows. DNA-dependent RNA polymerase catalyzes the transcription of DNA into RNA using the four ribonucleoside triphosphates as substrates. The sequence is that of Bifunctional DNA-directed RNA polymerase subunit beta-beta' (rpoBC) from Helicobacter hepaticus (strain ATCC 51449 / 3B1).